Reading from the N-terminus, the 475-residue chain is Ribulose bisphosphate carboxylase large chain (475 aa).

Residues M1–S2 constitute a propeptide that is removed on maturation. P3 carries the post-translational modification N-acetylproline. K14 bears the N6,N6,N6-trimethyllysine mark. Substrate contacts are provided by N123 and T173. The active-site Proton acceptor is the K175. Position 177 (K177) interacts with substrate. Residues K201, D203, and E204 each coordinate Mg(2+). The residue at position 201 (K201) is an N6-carboxylysine. H294 acts as the Proton acceptor in catalysis. Substrate is bound by residues R295, H327, and S379.

Belongs to the RuBisCO large chain family. Type I subfamily. As to quaternary structure, heterohexadecamer of 8 large chains and 8 small chains; disulfide-linked. The disulfide link is formed within the large subunit homodimers. Mg(2+) serves as cofactor. The disulfide bond which can form in the large chain dimeric partners within the hexadecamer appears to be associated with oxidative stress and protein turnover.

The protein resides in the plastid. Its subcellular location is the chloroplast. The catalysed reaction is 2 (2R)-3-phosphoglycerate + 2 H(+) = D-ribulose 1,5-bisphosphate + CO2 + H2O. The enzyme catalyses D-ribulose 1,5-bisphosphate + O2 = 2-phosphoglycolate + (2R)-3-phosphoglycerate + 2 H(+). In terms of biological role, ruBisCO catalyzes two reactions: the carboxylation of D-ribulose 1,5-bisphosphate, the primary event in carbon dioxide fixation, as well as the oxidative fragmentation of the pentose substrate in the photorespiration process. Both reactions occur simultaneously and in competition at the same active site. This chain is Ribulose bisphosphate carboxylase large chain, found in Staurastrum punctulatum (Green alga).